A 272-amino-acid polypeptide reads, in one-letter code: Acetylglutamate kinase (272 aa).

Substrate is bound by residues 46–47, arginine 68, and asparagine 166; that span reads GA.

It belongs to the acetylglutamate kinase family. ArgB subfamily.

The protein resides in the cytoplasm. The catalysed reaction is N-acetyl-L-glutamate + ATP = N-acetyl-L-glutamyl 5-phosphate + ADP. The protein operates within amino-acid biosynthesis; L-arginine biosynthesis; N(2)-acetyl-L-ornithine from L-glutamate: step 2/4. Catalyzes the ATP-dependent phosphorylation of N-acetyl-L-glutamate. In Dehalococcoides mccartyi (strain ATCC BAA-2100 / JCM 16839 / KCTC 5957 / BAV1), this protein is Acetylglutamate kinase.